Reading from the N-terminus, the 838-residue chain is MPLSYQHFRKLLLLDDETEAGPLEEELPRLADEDLNRRVAEDLNLGNLNVSIPWTHKVGNFTGLYSSTVPIFNPEWQTPSFPKIHLHEDIINRCQQFVGPLTVNEKRRLKLIMPARFYPNSTKYLPLDKGIKPYYPDQVVNHYFQTRHYLHTLWKAGILYKRETTRSASFCGSPYSWEQELQHSQRHGDESFCSQPSGILSRSSVGPCIRSQFNKSRLGLQPHQGPLATSQPGRSGSIRPRALPSTRRCFGVEPSGSGHIDYSANSSSHCLHQSAVRKAAYSHLSTSKRQSSSGHAVEFHSFAPSSARSQSQGPVFSCWWLQFRNTQPCSQYCLSHLVNLLEDWGPCVEHGEHHIRIPRTPARVTGGVFLVDKNPHNTAESRLVVDFSQFSRGLTRVSWPKFAVPNLQSLTNLLSSNLSWLSLDVSAAFYHIPLHPAAMPHLLIGSSGLSRYVARLSSNSRIHNNQYGTLQNLHDSCSRQLYVSLMLLYKTYGWKLHLYSHPIILGFRKIPMGVGLSPFLLAQFTSAICSVVRRAFPHCLAFSYMDDVVLGAKSVQHRESLYTAVTNFLLSLGIHLNPNKTKRWGYSLNFMGYVIGSWGTLPQDHIIQKIKHCFRKLPVNRPIDWKVCQRIVGLLGFAAPFTQCGYPALMPLYACIQAKQAFTFSPTYKAFLNQQYLNLYPVARQRSGLCQVFADATPTGWGLAIGHQRMRGTFVAPLPIHTAELLAACFARSRSGAKLIGTDNSVVLSRKYTSFPWLLGCTANWILRGTSFVYVPSALNPADDPSRGRLGLYRPLLRLPYRPTTGRTSLYAVSPSVPSHLPVRVHFASPLHVAWRPP.

The interval Met1–Gln179 is terminal protein domain (TP). Residues Glu180 to Leu341 are spacer. The segment at Leu218–Ala242 is disordered. Residues Glu342–Gln685 are polymerase/reverse transcriptase domain (RT). In terms of domain architecture, Reverse transcriptase spans Glu352–Ile595. Mg(2+) is bound by residues Asp424, Asp546, and Asp547.

Belongs to the hepadnaviridae P protein family.

It carries out the reaction DNA(n) + a 2'-deoxyribonucleoside 5'-triphosphate = DNA(n+1) + diphosphate. The enzyme catalyses Endonucleolytic cleavage to 5'-phosphomonoester.. Activated by host HSP70 and HSP40 in vitro to be able to bind the epsilon loop of the pgRNA. Because deletion of the RNase H region renders the protein partly chaperone-independent, the chaperones may be needed indirectly to relieve occlusion of the RNA-binding site by this domain. Inhibited by several reverse-transcriptase inhibitors: Lamivudine, Adefovir and Entecavir. In terms of biological role, multifunctional enzyme that converts the viral RNA genome into dsDNA in viral cytoplasmic capsids. This enzyme displays a DNA polymerase activity that can copy either DNA or RNA templates, and a ribonuclease H (RNase H) activity that cleaves the RNA strand of RNA-DNA heteroduplexes in a partially processive 3'- to 5'-endonucleasic mode. Neo-synthesized pregenomic RNA (pgRNA) are encapsidated together with the P protein, and reverse-transcribed inside the nucleocapsid. Initiation of reverse-transcription occurs first by binding the epsilon loop on the pgRNA genome, and is initiated by protein priming, thereby the 5'-end of (-)DNA is covalently linked to P protein. Partial (+)DNA is synthesized from the (-)DNA template and generates the relaxed circular DNA (RC-DNA) genome. After budding and infection, the RC-DNA migrates in the nucleus, and is converted into a plasmid-like covalently closed circular DNA (cccDNA). The activity of P protein does not seem to be necessary for cccDNA generation, and is presumably released from (+)DNA by host nuclear DNA repair machinery. The sequence is that of Protein P from Homo sapiens (Human).